Consider the following 476-residue polypeptide: Aspartyl/glutamyl-tRNA(Asn/Gln) amidotransferase subunit B (476 aa).

The protein belongs to the GatB/GatE family. GatB subfamily. Heterotrimer of A, B and C subunits.

The catalysed reaction is L-glutamyl-tRNA(Gln) + L-glutamine + ATP + H2O = L-glutaminyl-tRNA(Gln) + L-glutamate + ADP + phosphate + H(+). The enzyme catalyses L-aspartyl-tRNA(Asn) + L-glutamine + ATP + H2O = L-asparaginyl-tRNA(Asn) + L-glutamate + ADP + phosphate + 2 H(+). Functionally, allows the formation of correctly charged Asn-tRNA(Asn) or Gln-tRNA(Gln) through the transamidation of misacylated Asp-tRNA(Asn) or Glu-tRNA(Gln) in organisms which lack either or both of asparaginyl-tRNA or glutaminyl-tRNA synthetases. The reaction takes place in the presence of glutamine and ATP through an activated phospho-Asp-tRNA(Asn) or phospho-Glu-tRNA(Gln). The sequence is that of Aspartyl/glutamyl-tRNA(Asn/Gln) amidotransferase subunit B from Clostridium botulinum (strain Kyoto / Type A2).